The chain runs to 164 residues: FMN reductase (NADH) RutF (164 aa).

It belongs to the non-flavoprotein flavin reductase family. RutF subfamily.

The enzyme catalyses FMNH2 + NAD(+) = FMN + NADH + 2 H(+). Catalyzes the reduction of FMN to FMNH2 which is used to reduce pyrimidine by RutA via the Rut pathway. This chain is FMN reductase (NADH) RutF, found in Escherichia coli O127:H6 (strain E2348/69 / EPEC).